The chain runs to 1166 residues: Poly [ADP-ribose] polymerase tankyrase-2 (1166 aa).

ANK repeat units follow at residues 23–52 (PSAR…VNSR), 57–86 (RKST…NVQA), 90–119 (GGLI…DPNA), and 123–152 (WNYT…EPTI). At Asn203 the chain carries (3S)-3-hydroxyasparagine; by HIF1AN. ANK repeat units follow at residues 210 to 239 (RKST…DVHA), 243 to 272 (GDLV…CVNA), 276 to 305 (WQFT…DPTL), 363 to 395 (THET…NTNE), 399 to 428 (EFLT…KVNA), 432 to 461 (LGQT…DPNI), and 463 to 489 (SLQG…SLGH). A (3S)-3-hydroxyhistidine; by HIF1AN modification is found at His238. (3S)-3-hydroxyasparagine; by HIF1AN is present on Asn271. A (3S)-3-hydroxyasparagine; by HIF1AN modification is found at Asn427. Position 518 is a (3S)-3-hydroxyasparagine; by HIF1AN (Asn518). ANK repeat units follow at residues 525-554 (RQST…DVHA), 558-587 (GGLV…VVNV), 591-620 (WKFT…DPTK), and 624-652 (DGNT…LLDA). The segment at 545–553 (LLQHGADVH) is HIF1AN-binding. Position 553 is a (3S)-3-hydroxyhistidine; by HIF1AN (His553). Asn586 carries the (3S)-3-hydroxyasparagine; by HIF1AN modification. Asn671, Asn706, and Asn739 each carry (3S)-3-hydroxyasparagine; by HIF1AN. ANK repeat units lie at residues 678–707 (RHST…DVNA), 711–740 (GGLI…CVNA), and 744–773 (WAFT…DPTL). An SAM domain is found at 873 to 936 (GIDFSITQFI…IKGVERLISG (64 aa)). The region spanning 959–1164 (SPDDKEFQSV…YQIVRPEGMV (206 aa)) is the PARP catalytic domain. Residues Cys1081, His1084, Cys1089, and Cys1092 each coordinate Zn(2+).

This sequence belongs to the ARTD/PARP family. As to quaternary structure, oligomerizes and associates with TNKS. Interacts with the cytoplasmic domain of LNPEP/Otase in SLC2A4/GLUT4-vesicles. Binds to the N-terminus of Grb14 and TRF1 with its ankyrin repeat region. Interacts with HIF1AN. Interacts with RNF146; this interaction leads to ubiquitination and proteasomal degradation. Interacts with NUMA1. In terms of processing, ubiquitinated by RNF146 when auto-poly-ADP-ribosylated, leading to its degradation. Deubiquitinated by USP25; leading to stabilization. Post-translationally, ADP-ribosylated (-auto). Poly-ADP-ribosylated protein is recognized by RNF146, followed by ubiquitination.

Its subcellular location is the cytoplasm. The protein resides in the golgi apparatus membrane. It localises to the nucleus. The protein localises to the chromosome. It is found in the telomere. It catalyses the reaction NAD(+) + (ADP-D-ribosyl)n-acceptor = nicotinamide + (ADP-D-ribosyl)n+1-acceptor + H(+).. It carries out the reaction L-aspartyl-[protein] + NAD(+) = 4-O-(ADP-D-ribosyl)-L-aspartyl-[protein] + nicotinamide. The catalysed reaction is L-glutamyl-[protein] + NAD(+) = 5-O-(ADP-D-ribosyl)-L-glutamyl-[protein] + nicotinamide. Its function is as follows. Poly-ADP-ribosyltransferase involved in various processes such as Wnt signaling pathway, telomere length and vesicle trafficking. Acts as an activator of the Wnt signaling pathway by mediating poly-ADP-ribosylation of AXIN1 and AXIN2, 2 key components of the beta-catenin destruction complex: poly-ADP-ribosylated target proteins are recognized by RNF146, which mediates their ubiquitination and subsequent degradation. Also mediates poly-ADP-ribosylation of BLZF1 and CASC3, followed by recruitment of RNF146 and subsequent ubiquitination. Mediates poly-ADP-ribosylation of TERF1, thereby contributing to the regulation of telomere length. Stimulates 26S proteasome activity. This Mus musculus (Mouse) protein is Poly [ADP-ribose] polymerase tankyrase-2.